The sequence spans 529 residues: Peptide chain release factor 3 (529 aa).

In terms of domain architecture, tr-type G spans 11–280 (AKRRTFAIIS…GLVEWAPAPM (270 aa)). GTP contacts are provided by residues 20 to 27 (SHPDAGKT), 88 to 92 (DTPGH), and 142 to 145 (NKLD).

This sequence belongs to the TRAFAC class translation factor GTPase superfamily. Classic translation factor GTPase family. PrfC subfamily.

The protein localises to the cytoplasm. Functionally, increases the formation of ribosomal termination complexes and stimulates activities of RF-1 and RF-2. It binds guanine nucleotides and has strong preference for UGA stop codons. It may interact directly with the ribosome. The stimulation of RF-1 and RF-2 is significantly reduced by GTP and GDP, but not by GMP. This Yersinia pseudotuberculosis serotype O:1b (strain IP 31758) protein is Peptide chain release factor 3.